The following is a 289-amino-acid chain: Formamidopyrimidine-DNA glycosylase (289 aa).

Pro-2 serves as the catalytic Schiff-base intermediate with DNA. Glu-3 serves as the catalytic Proton donor. Lys-60 (proton donor; for beta-elimination activity) is an active-site residue. DNA-binding residues include His-94, Arg-126, and Arg-167. The segment at 252–287 (QVYGKPAGTPCPRCGTGLARIRIAGRSSVFCPRCQP) adopts an FPG-type zinc-finger fold. Arg-277 acts as the Proton donor; for delta-elimination activity in catalysis.

The protein belongs to the FPG family. As to quaternary structure, monomer. The cofactor is Zn(2+).

The enzyme catalyses Hydrolysis of DNA containing ring-opened 7-methylguanine residues, releasing 2,6-diamino-4-hydroxy-5-(N-methyl)formamidopyrimidine.. The catalysed reaction is 2'-deoxyribonucleotide-(2'-deoxyribose 5'-phosphate)-2'-deoxyribonucleotide-DNA = a 3'-end 2'-deoxyribonucleotide-(2,3-dehydro-2,3-deoxyribose 5'-phosphate)-DNA + a 5'-end 5'-phospho-2'-deoxyribonucleoside-DNA + H(+). Involved in base excision repair of DNA damaged by oxidation or by mutagenic agents. Acts as a DNA glycosylase that recognizes and removes damaged bases. Has a preference for oxidized purines, such as 7,8-dihydro-8-oxoguanine (8-oxoG). Has AP (apurinic/apyrimidinic) lyase activity and introduces nicks in the DNA strand. Cleaves the DNA backbone by beta-delta elimination to generate a single-strand break at the site of the removed base with both 3'- and 5'-phosphates. In Thermomicrobium roseum (strain ATCC 27502 / DSM 5159 / P-2), this protein is Formamidopyrimidine-DNA glycosylase.